The following is a 966-amino-acid chain: DNA mismatch repair protein MutS (966 aa).

An ATP-binding site is contributed by 709–716 (GPNMAGKS). The disordered stretch occupies residues 894 to 914 (EGQRPPSSPAQPPAPPAPVVV). The span at 899–912 (PSSPAQPPAPPAPV) shows a compositional bias: pro residues.

This sequence belongs to the DNA mismatch repair MutS family.

In terms of biological role, this protein is involved in the repair of mismatches in DNA. It is possible that it carries out the mismatch recognition step. This protein has a weak ATPase activity. The sequence is that of DNA mismatch repair protein MutS from Chloroflexus aurantiacus (strain ATCC 29366 / DSM 635 / J-10-fl).